A 155-amino-acid chain; its full sequence is 17.6 kDa class II heat shock protein (155 aa).

The sHSP domain maps to 38–155 (DAKAMAATPA…KPKTIQVQVA (118 aa)).

The protein belongs to the small heat shock protein (HSP20) family. In terms of assembly, may form oligomeric structures.

It localises to the cytoplasm. The polypeptide is 17.6 kDa class II heat shock protein (HSP17.6) (Arabidopsis thaliana (Mouse-ear cress)).